Consider the following 858-residue polypeptide: Bifunctional uridylyltransferase/uridylyl-removing enzyme (858 aa).

A uridylyltransferase region spans residues 1-324 (MSASVAAPPP…PATSGVTRVL (324 aa)). A uridylyl-removing region spans residues 325–681 (SPGRFVEKQG…ARPSPVGDAL (357 aa)). The 123-residue stretch at 443–565 (VDQHILMVLR…VGNERRLTAL (123 aa)) folds into the HD domain. 2 consecutive ACT domains span residues 682–761 (QVLV…PEPS) and 790–858 (ILSV…AIAV).

This sequence belongs to the GlnD family. The cofactor is Mg(2+).

The catalysed reaction is [protein-PII]-L-tyrosine + UTP = [protein-PII]-uridylyl-L-tyrosine + diphosphate. The enzyme catalyses [protein-PII]-uridylyl-L-tyrosine + H2O = [protein-PII]-L-tyrosine + UMP + H(+). Its activity is regulated as follows. Uridylyltransferase (UTase) activity is inhibited by glutamine, while glutamine activates uridylyl-removing (UR) activity. Functionally, modifies, by uridylylation and deuridylylation, the PII regulatory proteins (GlnB and homologs), in response to the nitrogen status of the cell that GlnD senses through the glutamine level. Under low glutamine levels, catalyzes the conversion of the PII proteins and UTP to PII-UMP and PPi, while under higher glutamine levels, GlnD hydrolyzes PII-UMP to PII and UMP (deuridylylation). Thus, controls uridylylation state and activity of the PII proteins, and plays an important role in the regulation of nitrogen assimilation and metabolism. This chain is Bifunctional uridylyltransferase/uridylyl-removing enzyme, found in Burkholderia thailandensis (strain ATCC 700388 / DSM 13276 / CCUG 48851 / CIP 106301 / E264).